The sequence spans 1429 residues: Nitric oxide synthase 1 (1429 aa).

Residues 1 to 200 form an interaction with NOSIP region; sequence MEEHTFGVQQ…LQDSGEQDEL (200 aa). In terms of domain architecture, PDZ spans 17–99; it reads SVRLFKRKVG…ETHVVLILRG (83 aa). 2 disordered regions span residues 114–174 and 271–298; these read DGTP…SVSQ and NNPY…SRCP. An interaction with DYNLL1/PIN region spans residues 163–240; the sequence is QGRGQGAGSV…TGIQVDRDLD (78 aa). Over residues 272–294 the composition is skewed to polar residues; that stretch reads NPYSENEQSPASGKQSPTKNGSP. Residue Ser-280 is modified to Phosphoserine. Ser-334 is a (6R)-L-erythro-5,6,7,8-tetrahydrobiopterin binding site. Position 415 (Cys-415) interacts with heme b. Residues Gln-478, Trp-587, Tyr-588, and Glu-592 each coordinate L-arginine. Positions 677, 678, and 691 each coordinate (6R)-L-erythro-5,6,7,8-tetrahydrobiopterin. Tyr-706 is a heme b binding site. The calmodulin-binding stretch occupies residues 725-745; the sequence is KRRAIGFKKLAEAVKFSAKLM. The region spanning 755-935 is the Flavodoxin-like domain; that stretch reads ATILYATETG…AFRTWAKKVF (181 aa). FMN is bound by residues Thr-761, Glu-762, Thr-763, Lys-765, Ser-766, Ser-807, Thr-808, and Gly-812. 3 positions are modified to phosphoserine: Ser-847, Ser-857, and Ser-858. FMN contacts are provided by Ser-886, His-891, Cys-893, Glu-919, and Gln-923. In terms of domain architecture, FAD-binding FR-type spans 990-1237; sequence KRVSAARLLS…VRGAPSFHLP (248 aa). Arg-1010 provides a ligand contact to NADP(+). Residues His-1032, Arg-1173, Tyr-1174, Tyr-1175, Ser-1176, Thr-1191, and Ala-1193 each coordinate FAD. Residue Ser-1196 participates in NADP(+) binding. Positions 1197, 1210, 1211, and 1212 each coordinate FAD. Residues Thr-1251, Arg-1284, Ser-1313, Arg-1314, Lys-1320, Tyr-1322, Gln-1324, Asp-1357, Thr-1398, and Arg-1400 each contribute to the NADP(+) site.

This sequence belongs to the NOS family. Homodimer. Interacts with DLG4; the interaction possibly being prevented by the association between NOS1 and CAPON. Forms a ternary complex with CAPON and RASD1. Forms a ternary complex with CAPON and SYN1. Interacts with ZDHHC23. Interacts with NOSIP; which may impair its synaptic location. Interacts with HTR4. Interacts with VAC14. Interacts (via N-terminal domain) with DLG4 (via N-terminal tandem pair of PDZ domains). Interacts with SLC6A4. Forms a complex with ASL, ASS1 and SLC7A1; the complex regulates cell-autonomous L-arginine synthesis and citrulline recycling while channeling extracellular L-arginine to nitric oxide synthesis pathway. Interacts with DMD; localizes NOS1 to sarcolemma in muscle cells. Interacts with DYNLL1; inhibits the nitric oxide synthase activity. It depends on heme b as a cofactor. FAD serves as cofactor. The cofactor is FMN. Requires (6R)-L-erythro-5,6,7,8-tetrahydrobiopterin as cofactor. In terms of processing, ubiquitinated; mediated by STUB1/CHIP in the presence of Hsp70 and Hsp40 (in vitro). Widely expressed in the nervous system: expressed in cerebrum, olfactory bulb, hippocampus, midbrain, cerebellum, pons, medulla oblongata, and spinal cord. Also found in skeletal muscle, where it is localized beneath the sarcolemma of fast twitch muscle fibers, and in spleen, heart, kidney, and liver. N-NOS-1 and N-NOS-2 are found in all parts of the nervous system. NNOS beta and gamma occur in a region-specific manner in the brain and NNOS beta expression is developmentally regulated. NNOS Mu is only found in mature skeletal and cardiac muscles.

Its subcellular location is the cell membrane. It localises to the sarcolemma. It is found in the cell projection. The protein resides in the dendritic spine. It carries out the reaction 2 L-arginine + 3 NADPH + 4 O2 + H(+) = 2 L-citrulline + 2 nitric oxide + 3 NADP(+) + 4 H2O. With respect to regulation, stimulated by calcium/calmodulin. Inhibited by DYNLL1 that prevents the dimerization of the protein. Inhibited by NOSIP. In terms of biological role, produces nitric oxide (NO) which is a messenger molecule with diverse functions throughout the body. In the brain and peripheral nervous system, NO displays many properties of a neurotransmitter. Probably has nitrosylase activity and mediates cysteine S-nitrosylation of cytoplasmic target proteins such SRR. Isoform NNOS Mu may be an effector enzyme for the dystrophin complex. This chain is Nitric oxide synthase 1, found in Mus musculus (Mouse).